Here is a 343-residue protein sequence, read N- to C-terminus: N-acetyl-gamma-glutamyl-phosphate reductase (343 aa).

Cys147 is an active-site residue.

It belongs to the NAGSA dehydrogenase family. Type 1 subfamily.

It is found in the cytoplasm. The catalysed reaction is N-acetyl-L-glutamate 5-semialdehyde + phosphate + NADP(+) = N-acetyl-L-glutamyl 5-phosphate + NADPH + H(+). The protein operates within amino-acid biosynthesis; L-arginine biosynthesis; N(2)-acetyl-L-ornithine from L-glutamate: step 3/4. Its function is as follows. Catalyzes the NADPH-dependent reduction of N-acetyl-5-glutamyl phosphate to yield N-acetyl-L-glutamate 5-semialdehyde. This chain is N-acetyl-gamma-glutamyl-phosphate reductase, found in Listeria welshimeri serovar 6b (strain ATCC 35897 / DSM 20650 / CCUG 15529 / CIP 8149 / NCTC 11857 / SLCC 5334 / V8).